The chain runs to 104 residues: uncharacterized protein (104 aa).

Disordered stretches follow at residues 1 to 20 (MTET…TTRK) and 83 to 104 (TASA…VAKK). Low complexity predominate over residues 83-93 (TASASSSGKKV). Over residues 94-104 (VASKKKVVAKK) the composition is skewed to basic residues.

This is an uncharacterized protein from Dictyostelium discoideum (Social amoeba).